Consider the following 131-residue polypeptide: Small ribosomal subunit protein uS8 (131 aa).

It belongs to the universal ribosomal protein uS8 family. As to quaternary structure, part of the 30S ribosomal subunit. Contacts proteins S5 and S12.

In terms of biological role, one of the primary rRNA binding proteins, it binds directly to 16S rRNA central domain where it helps coordinate assembly of the platform of the 30S subunit. The protein is Small ribosomal subunit protein uS8 of Bacteroides fragilis (strain ATCC 25285 / DSM 2151 / CCUG 4856 / JCM 11019 / LMG 10263 / NCTC 9343 / Onslow / VPI 2553 / EN-2).